A 778-amino-acid chain; its full sequence is Mitochondrial intermediate peptidase (778 aa).

A mitochondrion-targeting transit peptide spans 1–37 (MIRTVTRPRQWQRWVYSSCLLQRAVPPAAARQQPRFT). H557 serves as a coordination point for Zn(2+). E558 is an active-site residue. 2 residues coordinate Zn(2+): H561 and H564.

The protein belongs to the peptidase M3 family. Zn(2+) serves as cofactor.

The protein resides in the mitochondrion matrix. It carries out the reaction Release of an N-terminal octapeptide as second stage of processing of some proteins imported into the mitochondrion.. Cleaves proteins, imported into the mitochondrion, to their mature size. While most mitochondrial precursor proteins are processed to the mature form in one step by mitochondrial processing peptidase (MPP), the sequential cleavage by MIP of an octapeptide after initial processing by MPP is a required step for a subgroup of nuclear-encoded precursor proteins destined for the matrix or the inner membrane. This chain is Mitochondrial intermediate peptidase (OCT1), found in Chaetomium globosum (strain ATCC 6205 / CBS 148.51 / DSM 1962 / NBRC 6347 / NRRL 1970) (Soil fungus).